The chain runs to 185 residues: Capsid protein (185 aa).

The disordered stretch occupies residues 135–185 (PNAPILSTLPETTVVRRRDRGRSPRRRTPSPRRRRSQSPRRRRSQSRESQC). The segment covering 149-178 (VRRRDRGRSPRRRTPSPRRRRSQSPRRRRS) has biased composition (basic residues). Residues S157, S164, and S172 each carry the phosphoserine; by host modification. A 1; half-length repeat occupies 157-163 (SPRRRTP). Residues 157 to 179 (SPRRRTPSPRRRRSQSPRRRRSQ) form a 3 X 8 AA repeats of S-P-R-R-R-[PR]-S-Q region. A Bipartite nuclear localization signal motif is present at residues 160-177 (RRTPSPRRRRSQSPRRRR). 2 consecutive repeat copies span residues 164 to 171 (SPRRRRSQ) and 172 to 179 (SPRRRRSQ). Residues 179 to 185 (QSRESQC) are RNA binding.

The protein belongs to the orthohepadnavirus core antigen family. As to quaternary structure, homodimerizes, then multimerizes. Interacts with cytosol exposed regions of viral L glycoprotein present in the reticulum-to-Golgi compartment. Interacts with human FLNB. Phosphorylated form interacts with host importin alpha; this interaction depends on the exposure of the NLS, which itself depends upon genome maturation and/or phosphorylation of the capsid protein. Interacts with host NUP153. Phosphorylated by host SRPK1, SRPK2, and maybe protein kinase C or GAPDH. Phosphorylation is critical for pregenomic RNA packaging. Protein kinase C phosphorylation is stimulated by HBx protein and may play a role in transport of the viral genome to the nucleus at the late step during the viral replication cycle.

Its subcellular location is the virion. The protein localises to the host cytoplasm. Functionally, self assembles to form an icosahedral capsid. Most capsids appear to be large particles with an icosahedral symmetry of T=4 and consist of 240 copies of capsid protein, though a fraction forms smaller T=3 particles consisting of 180 capsid proteins. Entering capsids are transported along microtubules to the nucleus. Phosphorylation of the capsid is thought to induce exposure of nuclear localization signal in the C-terminal portion of the capsid protein that allows binding to the nuclear pore complex via the importin (karyopherin-) alpha and beta. Capsids are imported in intact form through the nuclear pore into the nuclear basket, where it probably binds NUP153. Only capsids that contain the mature viral genome can release the viral DNA and capsid protein into the nucleoplasm. Immature capsids get stuck in the basket. Capsids encapsulate the pre-genomic RNA and the P protein. Pre-genomic RNA is reverse-transcribed into DNA while the capsid is still in the cytoplasm. The capsid can then either be directed to the nucleus, providing more genomes for transcription, or bud through the endoplasmic reticulum to provide new virions. This is Capsid protein from Hepatitis B virus genotype A3 (isolate Cameroon/CMR711/1994) (HBV-A).